A 609-amino-acid chain; its full sequence is Isopenicillin N epimerase component 1 (609 aa).

185 to 196 (MLSGSGTTGLPK) is a binding site for AMP. The segment at 545-570 (STDNHKHNKVPLRDEGVDPRSMGSKV) is disordered.

This sequence belongs to the ATP-dependent AMP-binding enzyme family.

It catalyses the reaction isopenicillin N = penicillin N. It functions in the pathway antibiotic biosynthesis; cephalosporin C biosynthesis. In terms of biological role, together with cefD2, catalyzes the reversible isomerization between isopenicillin N and penicillin N. This two-component IPN epimerase system may function by two sequential steps, an activation of isopenicillin N by the acyl-CoA synthase component cefD1, followed by epimerization by the acyl-CoA racemase component cefD2. The polypeptide is Isopenicillin N epimerase component 1 (cefD1) (Hapsidospora chrysogena (Acremonium chrysogenum)).